The following is an 843-amino-acid chain: uncharacterized protein (843 aa).

The segment at residues 15–42 is a DNA-binding region (zn(2)-C6 fungal-type); that stretch reads CLRCKQRKIKCDKLWPTCSKCKASSSIC.

Its subcellular location is the nucleus. In terms of biological role, required for growth on non-fermentable carbon sources. This is an uncharacterized protein from Saccharomyces cerevisiae (strain ATCC 204508 / S288c) (Baker's yeast).